Reading from the N-terminus, the 429-residue chain is Histidinol dehydrogenase (429 aa).

Residues Tyr-127, Gln-188, and Asn-211 each coordinate NAD(+). Residues Ser-234, Gln-256, and His-259 each contribute to the substrate site. Residues Gln-256 and His-259 each contribute to the Zn(2+) site. Residues Glu-324 and His-325 each act as proton acceptor in the active site. 4 residues coordinate substrate: His-325, Asp-358, Glu-412, and His-417. A Zn(2+)-binding site is contributed by Asp-358. His-417 lines the Zn(2+) pocket.

It belongs to the histidinol dehydrogenase family. Zn(2+) serves as cofactor.

The enzyme catalyses L-histidinol + 2 NAD(+) + H2O = L-histidine + 2 NADH + 3 H(+). Its pathway is amino-acid biosynthesis; L-histidine biosynthesis; L-histidine from 5-phospho-alpha-D-ribose 1-diphosphate: step 9/9. Functionally, catalyzes the sequential NAD-dependent oxidations of L-histidinol to L-histidinaldehyde and then to L-histidine. The sequence is that of Histidinol dehydrogenase from Bacillus cereus (strain ATCC 10987 / NRS 248).